The chain runs to 70 residues: Protein SlyX homolog (70 aa).

The protein belongs to the SlyX family.

This Shewanella pealeana (strain ATCC 700345 / ANG-SQ1) protein is Protein SlyX homolog.